Reading from the N-terminus, the 176-residue chain is Peptidoglycan-associated lipoprotein (176 aa).

Positions 1–32 are cleaved as a signal peptide; sequence MSRIDTPAASRMQTIARNPVMIALVMTLALAG. Cys-33 carries N-palmitoyl cysteine lipidation. Residue Cys-33 is the site of S-diacylglycerol cysteine attachment. In terms of domain architecture, OmpA-like spans 58–175; it reads QQDFTVNVGD…RAVTVLGGAG (118 aa).

The protein belongs to the Pal lipoprotein family. As to quaternary structure, the Tol-Pal system is composed of five core proteins: the inner membrane proteins TolA, TolQ and TolR, the periplasmic protein TolB and the outer membrane protein Pal. They form a network linking the inner and outer membranes and the peptidoglycan layer.

The protein resides in the cell outer membrane. Functionally, part of the Tol-Pal system, which plays a role in outer membrane invagination during cell division and is important for maintaining outer membrane integrity. This is Peptidoglycan-associated lipoprotein from Rhizobium meliloti (strain 1021) (Ensifer meliloti).